We begin with the raw amino-acid sequence, 687 residues long: DNA-directed RNA polymerase subunit beta' (687 aa).

4 residues coordinate Zn(2+): C69, C71, C87, and C90. Residues D492, D494, and D496 each coordinate Mg(2+).

This sequence belongs to the RNA polymerase beta' chain family. RpoC1 subfamily. In terms of assembly, in plastids the minimal PEP RNA polymerase catalytic core is composed of four subunits: alpha, beta, beta', and beta''. When a (nuclear-encoded) sigma factor is associated with the core the holoenzyme is formed, which can initiate transcription. Requires Mg(2+) as cofactor. The cofactor is Zn(2+).

Its subcellular location is the plastid. It localises to the chloroplast. It catalyses the reaction RNA(n) + a ribonucleoside 5'-triphosphate = RNA(n+1) + diphosphate. In terms of biological role, DNA-dependent RNA polymerase catalyzes the transcription of DNA into RNA using the four ribonucleoside triphosphates as substrates. The sequence is that of DNA-directed RNA polymerase subunit beta' from Silene latifolia (White campion).